A 401-amino-acid polypeptide reads, in one-letter code: Imidazolonepropionase (401 aa).

Positions 70 and 72 each coordinate Fe(3+). Positions 70 and 72 each coordinate Zn(2+). Residues arginine 79, tyrosine 142, and histidine 175 each coordinate 4-imidazolone-5-propanoate. Tyrosine 142 is an N-formimidoyl-L-glutamate binding site. Histidine 238 is a Fe(3+) binding site. Histidine 238 lines the Zn(2+) pocket. Residue glutamine 241 participates in 4-imidazolone-5-propanoate binding. A Fe(3+)-binding site is contributed by aspartate 313. Residue aspartate 313 participates in Zn(2+) binding. Positions 315 and 317 each coordinate N-formimidoyl-L-glutamate. A 4-imidazolone-5-propanoate-binding site is contributed by threonine 318.

This sequence belongs to the metallo-dependent hydrolases superfamily. HutI family. The cofactor is Zn(2+). Fe(3+) is required as a cofactor.

It is found in the cytoplasm. It carries out the reaction 4-imidazolone-5-propanoate + H2O = N-formimidoyl-L-glutamate. Its pathway is amino-acid degradation; L-histidine degradation into L-glutamate; N-formimidoyl-L-glutamate from L-histidine: step 3/3. Its function is as follows. Catalyzes the hydrolytic cleavage of the carbon-nitrogen bond in imidazolone-5-propanoate to yield N-formimidoyl-L-glutamate. It is the third step in the universal histidine degradation pathway. The sequence is that of Imidazolonepropionase from Xanthomonas oryzae pv. oryzae (strain MAFF 311018).